The primary structure comprises 106 residues: MSSAVDATGNPIPTSAVLTASAKHIGMRCMPENVAFLKCKKNDPNPEKCLDKGRDVTRCVLGLLKDLHQKCQKEMDDYVGCMYYYTNEFDLCRKEQEAFEKVCPLK.

Serine 2 carries the post-translational modification N-acetylserine. 2 CHCH domains span residues 26–67 (GMRC…LKDL) and 68–106 (HQKC…CPLK). 3 consecutive short sequence motifs (cx9C motif) follow at residues 29-39 (CMPENVAFLKC), 49-59 (CLDKGRDVTRC), and 71-81 (CQKEMDDYVGC). Disulfide bonds link cysteine 29–cysteine 59, cysteine 39–cysteine 49, cysteine 71–cysteine 103, and cysteine 81–cysteine 92. The Cx10C motif signature appears at 92 to 103 (CRKEQEAFEKVC).

It belongs to the complex I NDUFA8 subunit family. In terms of assembly, complex I is composed of at least 49 different subunits.

The protein localises to the mitochondrion. It is found in the mitochondrion intermembrane space. Accessory subunit of the mitochondrial membrane respiratory chain NADH dehydrogenase (Complex I), that is believed not to be involved in catalysis. Complex I functions in the transfer of electrons from NADH to the respiratory chain. The immediate electron acceptor for the enzyme is believed to be ubiquinone. This Arabidopsis thaliana (Mouse-ear cress) protein is NADH dehydrogenase [ubiquinone] 1 alpha subcomplex subunit 8-B.